Reading from the N-terminus, the 207-residue chain is Dephospho-CoA kinase (207 aa).

In terms of domain architecture, DPCK spans 5–202 (VVGLTGGIGS…LQYLKLSAEK (198 aa)). Residue 13–18 (GSGKST) coordinates ATP.

It belongs to the CoaE family.

It localises to the cytoplasm. It carries out the reaction 3'-dephospho-CoA + ATP = ADP + CoA + H(+). It functions in the pathway cofactor biosynthesis; coenzyme A biosynthesis; CoA from (R)-pantothenate: step 5/5. Catalyzes the phosphorylation of the 3'-hydroxyl group of dephosphocoenzyme A to form coenzyme A. In Dechloromonas aromatica (strain RCB), this protein is Dephospho-CoA kinase.